The chain runs to 473 residues: Calcium/calmodulin-dependent protein kinase type IV (473 aa).

Phosphoserine; by autocatalysis is present on residues S12 and S13. In terms of domain architecture, Protein kinase spans 46–300 (FEVESELGRG…TFQALQHPWV (255 aa)). ATP is bound by residues 52 to 60 (LGRGATSIV) and K75. Residue T57 is glycosylated (O-linked (GlcNAc) threonine). S58 carries an O-linked (GlcNAc) serine glycan. The O-linked (GlcNAc) serine glycan is linked to S137. D164 (proton acceptor) is an active-site residue. S189 carries O-linked (GlcNAc) serine glycosylation. T200 bears the Phosphothreonine; by CaMKK1 and CaMKK2 mark. An autoinhibitory domain region spans residues 305–321 (ANFVHMDTAQKKLQEFN). Residues 306–323 (NFVHMDTAQKKLQEFNAR) form a PP2A-binding region. The segment at 322–341 (ARRKLKAAVKAVVASSRLGS) is calmodulin-binding. S336 is subject to Phosphoserine; by autocatalysis. At S341 the chain carries Phosphoserine. Residues 341–350 (SASSSHGSIQ) show a composition bias toward low complexity. Disordered regions lie at residues 341 to 368 (SASS…GNED) and 445 to 473 (EEAA…LPEY). Residues S344, S345, and S356 are each glycosylated (O-linked (GlcNAc) serine). S360 carries the phosphoserine modification.

Belongs to the protein kinase superfamily. CAMK Ser/Thr protein kinase family. CaMK subfamily. In terms of assembly, monomer. Interacts with protein phosphatase 2A (PPP2CA/PPP2CB); the interaction is mutually exclusive with binding to Ca(2+)/calmodulin. In terms of processing, phosphorylated by CaMKK1 and CaMKK2 on Thr-200. Dephosphorylated by protein phosphatase 2A. Autophosphorylated on Ser-12 and Ser-13. Post-translationally, glycosylation at Ser-189 modulates the phosphorylation of CaMK4 at Thr-200 and negatively regulates its activity toward CREB1 in basal conditions and during early inomycin stimulation. In terms of tissue distribution, expressed in brain, thymus, CD4 T-cells, testis and epithelial ovarian cancer tissue.

The protein localises to the cytoplasm. Its subcellular location is the nucleus. The catalysed reaction is L-seryl-[protein] + ATP = O-phospho-L-seryl-[protein] + ADP + H(+). The enzyme catalyses L-threonyl-[protein] + ATP = O-phospho-L-threonyl-[protein] + ADP + H(+). With respect to regulation, activated by Ca(2+)/calmodulin. Binding of calmodulin results in conformational change that relieves intrasteric autoinhibition and allows phosphorylation of Thr-200 within the activation loop by CaMKK1 or CaMKK2. Phosphorylation of Thr-200 results in a 10-20-fold increase in total activity to generate Ca(2+)/calmodulin-independent activity. Autophosphorylation of the N-terminus Ser-12 and Ser-13 is required for full activation. Inactivated by protein phosphatase 2A (PPP2CA/PPP2CB) which dephosphorylates Thr-200, thereby terminating autonomous activity and helping to maintain the enzyme in its autoinhibited state. In terms of biological role, calcium/calmodulin-dependent protein kinase that operates in the calcium-triggered CaMKK-CaMK4 signaling cascade and regulates, mainly by phosphorylation, the activity of several transcription activators, such as CREB1, MEF2D, JUN and RORA, which play pivotal roles in immune response, inflammation, and memory consolidation. In the thymus, regulates the CD4(+)/CD8(+) double positive thymocytes selection threshold during T-cell ontogeny. In CD4 memory T-cells, is required to link T-cell antigen receptor (TCR) signaling to the production of IL2, IFNG and IL4 (through the regulation of CREB and MEF2). Regulates the differentiation and survival phases of osteoclasts and dendritic cells (DCs). Mediates DCs survival by linking TLR4 and the regulation of temporal expression of BCL2. Phosphorylates the transcription activator CREB1 on 'Ser-133' in hippocampal neuron nuclei and contribute to memory consolidation and long term potentiation (LTP) in the hippocampus. Can activate the MAP kinases MAPK1/ERK2, MAPK8/JNK1 and MAPK14/p38 and stimulate transcription through the phosphorylation of ELK1 and ATF2. Can also phosphorylate in vitro CREBBP, PRM2, MEF2A and STMN1/OP18. The chain is Calcium/calmodulin-dependent protein kinase type IV (CAMK4) from Homo sapiens (Human).